A 371-amino-acid chain; its full sequence is tRNA (guanine(26)-N(2))-dimethyltransferase (371 aa).

The region spanning 4–368 is the Trm1 methyltransferase domain; sequence VEVTEGRTRF…APLPVLEKVV (365 aa). The S-adenosyl-L-methionine site is built by R41, R66, D82, D108, and A109. Residues C237, C240, C256, and C259 each coordinate Zn(2+).

The protein belongs to the class I-like SAM-binding methyltransferase superfamily. Trm1 family.

The enzyme catalyses guanosine(26) in tRNA + 2 S-adenosyl-L-methionine = N(2)-dimethylguanosine(26) in tRNA + 2 S-adenosyl-L-homocysteine + 2 H(+). Its function is as follows. Dimethylates a single guanine residue at position 26 of a number of tRNAs using S-adenosyl-L-methionine as donor of the methyl groups. The protein is tRNA (guanine(26)-N(2))-dimethyltransferase of Methanoculleus marisnigri (strain ATCC 35101 / DSM 1498 / JR1).